We begin with the raw amino-acid sequence, 288 residues long: Homoserine kinase (288 aa).

79–89 (PLARGLGSSSS) lines the ATP pocket.

It belongs to the GHMP kinase family. Homoserine kinase subfamily.

The protein localises to the cytoplasm. The enzyme catalyses L-homoserine + ATP = O-phospho-L-homoserine + ADP + H(+). Its pathway is amino-acid biosynthesis; L-threonine biosynthesis; L-threonine from L-aspartate: step 4/5. Its function is as follows. Catalyzes the ATP-dependent phosphorylation of L-homoserine to L-homoserine phosphate. This Streptococcus gordonii (strain Challis / ATCC 35105 / BCRC 15272 / CH1 / DL1 / V288) protein is Homoserine kinase.